The following is a 123-amino-acid chain: Large ribosomal subunit protein bL12 (123 aa).

This sequence belongs to the bacterial ribosomal protein bL12 family. Homodimer. Part of the ribosomal stalk of the 50S ribosomal subunit. Forms a multimeric L10(L12)X complex, where L10 forms an elongated spine to which 2 to 4 L12 dimers bind in a sequential fashion. Binds GTP-bound translation factors.

Functionally, forms part of the ribosomal stalk which helps the ribosome interact with GTP-bound translation factors. Is thus essential for accurate translation. In Rhodospirillum rubrum (strain ATCC 11170 / ATH 1.1.1 / DSM 467 / LMG 4362 / NCIMB 8255 / S1), this protein is Large ribosomal subunit protein bL12.